A 292-amino-acid polypeptide reads, in one-letter code: Elongation factor Ts (292 aa).

The segment at 80-83 (TDFV) is involved in Mg(2+) ion dislocation from EF-Tu.

Belongs to the EF-Ts family.

Its subcellular location is the cytoplasm. Its function is as follows. Associates with the EF-Tu.GDP complex and induces the exchange of GDP to GTP. It remains bound to the aminoacyl-tRNA.EF-Tu.GTP complex up to the GTP hydrolysis stage on the ribosome. The sequence is that of Elongation factor Ts from Tolumonas auensis (strain DSM 9187 / NBRC 110442 / TA 4).